The sequence spans 501 residues: MDKKKLFQYTLDGKFTDLELTLVDSNDTLTMHLHKVILSSSCPYFETMFSNSFSDSVSDKFRMEVINVYVMADIINSFYITDIERSQNLSEVDYQLLYTQSRNFLGLEHKIQNLEKIIFPENKFDKLLDTIDSCIGYNKETISILFYNMPMDYDLSKLPIKLLKKMSKISRYFILCIDSDRIELHNNHSCFSIGPVKLNYNCKLYKLLYSPIYHKYLMVNDTIHLIDTETDLSRISFDNNRYYCTNAVLSTDNRYVYSVYTNSTIRKFQTETTELIGVWYRDGMPIDTVNKNQGPITAFDDRPKKIMYSTPYDYIIVQYGTSLVCYKCLDMSIHWEMDNVHLPTLSQCEKYIVCLKGITGNQLCVIDIEKDSLKFGPILANCRYICNHDNTTVIIIHDYKISGSKIRVYDWVNNIFTYENESFNVSDITYIDHIENDNYIIVSHDIIDDSYISINKWNFKEDTTKLVTACYDNYSHKFYTITNFKAALQKRIKEYIDTNSN.

One can recognise a BTB domain in the interval 16 to 87 (TDLELTLVDS…FYITDIERSQ (72 aa)).

The protein belongs to the mimivirus BTB/WD family.

This chain is Putative BTB/POZ domain-containing protein L107, found in Acanthamoeba polyphaga mimivirus (APMV).